A 277-amino-acid chain; its full sequence is Inositol monophosphatase 1 (277 aa).

Residues glutamate 70, aspartate 90, isoleucine 92, and aspartate 93 each coordinate Mg(2+). Glutamate 70 is a binding site for substrate. Substrate is bound at residue isoleucine 92–threonine 95. Threonine 168 bears the Phosphothreonine mark. Substrate is bound by residues glycine 194–alanine 196, glutamate 213, and aspartate 220. Aspartate 220 contacts Mg(2+).

It belongs to the inositol monophosphatase superfamily. As to quaternary structure, homodimer. It depends on Mg(2+) as a cofactor.

It is found in the cytoplasm. The enzyme catalyses a myo-inositol phosphate + H2O = myo-inositol + phosphate. It catalyses the reaction 1D-myo-inositol 1-phosphate + H2O = myo-inositol + phosphate. It carries out the reaction 1D-myo-inositol 2-phosphate + H2O = myo-inositol + phosphate. The catalysed reaction is 1D-myo-inositol 3-phosphate + H2O = myo-inositol + phosphate. The enzyme catalyses 1D-myo-inositol 4-phosphate + H2O = myo-inositol + phosphate. It catalyses the reaction 1D-myo-inositol 5-phosphate + H2O = myo-inositol + phosphate. It carries out the reaction 1D-myo-inositol 6-phosphate + H2O = myo-inositol + phosphate. The catalysed reaction is scyllo-inositol 1-phosphate + H2O = scyllo-inositol + phosphate. The enzyme catalyses alpha-D-galactose 1-phosphate + H2O = D-galactose + phosphate. It catalyses the reaction alpha-D-glucose 1-phosphate + H2O = D-glucose + phosphate. It carries out the reaction D-glucose 6-phosphate + H2O = D-glucose + phosphate. The catalysed reaction is beta-D-fructose 1-phosphate + H2O = D-fructose + phosphate. The enzyme catalyses glycerol 2-phosphate + H2O = glycerol + phosphate. It catalyses the reaction adenosine 2'-phosphate + H2O = adenosine + phosphate. It participates in polyol metabolism; myo-inositol biosynthesis; myo-inositol from D-glucose 6-phosphate: step 2/2. Its activity is regulated as follows. Inhibited by Li(+), Ca(2+) and Mn(2+), but also by Mg(2+) at concentrations above 3 mM. Functionally, phosphatase involved in the dephosphorylation of myo-inositol monophosphate to generate myo-inositol. Is also able to dephosphorylate scyllo-inositol-phosphate, myo-inositol 1,4-diphosphate, scyllo-inositol-1,3-diphosphate and scyllo-inositol-1,4-diphosphate. Also dephosphorylates in vitro other sugar-phosphates including D-galactose-1-phosphate, glucose-1-phosphate, glucose-6-phosphate, fructose-1-phosphate, beta-glycerophosphate and 2'-AMP. Responsible for the provision of inositol required for synthesis of phosphatidylinositol and polyphosphoinositides, and involved in maintaining normal brain function. Has been implicated as the pharmacological target for lithium Li(+) action in brain. This is Inositol monophosphatase 1 (IMPA1) from Pongo abelii (Sumatran orangutan).